We begin with the raw amino-acid sequence, 70 residues long: Virion membrane protein OPG139 (70 aa).

The helical transmembrane segment at 1 to 21 (MIGILLLIGICVAVTVAILYS) threads the bilayer. Residues 22–70 (MYNKIKNSQNPNPSPNLNSPPPEPKNTKFVNNLEKDHISSLYNLVKSSV) are Virion surface-facing. A disordered region spans residues 30-50 (QNPNPSPNLNSPPPEPKNTKF). Residues 33 to 45 (NPSPNLNSPPPEP) are compositionally biased toward pro residues. Ser-40 is subject to Phosphoserine; by host.

The protein belongs to the orthopoxvirus OPG139 family. In terms of processing, phosphorylated by a OPG054-independent mechanism.

Its subcellular location is the virion membrane. In terms of biological role, essential for the encapsidation of DNA into immature virions (IV) and the subsequent maturation of IV into mature virions (MV). The polypeptide is Virion membrane protein OPG139 (OPG139) (Homo sapiens (Human)).